Here is a 481-residue protein sequence, read N- to C-terminus: Hyaluronidase-4 (481 aa).

Over M1–Q8 the chain is Cytoplasmic. The helical transmembrane segment at L9 to L29 threads the bilayer. Topologically, residues K30 to D453 are extracellular. 5 cysteine pairs are disulfide-bonded: C59–C351, C223–C237, C376–C387, C381–C435, and C437–C446. N-linked (GlcNAc...) asparagine glycans are attached at residues N86 and N115. E147 serves as the catalytic Proton donor. The N-linked (GlcNAc...) (complex) asparagine glycan is linked to N177. N-linked (GlcNAc...) asparagine glycosylation is present at N343. Residues G454–A474 form a helical membrane-spanning segment. Residues S475 to L481 are Cytoplasmic-facing.

It belongs to the glycosyl hydrolase 56 family. In terms of tissue distribution, detected in placenta and skeletal muscle.

Its subcellular location is the membrane. The enzyme catalyses Random hydrolysis of (1-&gt;4)-linkages between N-acetyl-beta-D-glucosamine and D-glucuronate residues in hyaluronate.. In terms of biological role, endo-hyaluronidase that degrades hyaluronan to smaller oligosaccharide fragments. Also has chondroitin sulfate hydrolase activity, The best substrate being the galactosaminidic linkage in the sequence of a trisulfated tetrasaccharide. The protein is Hyaluronidase-4 (HYAL4) of Homo sapiens (Human).